Reading from the N-terminus, the 85-residue chain is UPF0335 protein Plav_2034 (85 aa).

The protein belongs to the UPF0335 family.

The chain is UPF0335 protein Plav_2034 from Parvibaculum lavamentivorans (strain DS-1 / DSM 13023 / NCIMB 13966).